The sequence spans 350 residues: MQTVNTHKLISHLQQQGQFLTLSRCSGELVQNPISFTLYEHTQVSIISPGIISFSPKIKSDKAIVLSSGIHGNETAPIEICDQYVIDILTGKIRVAHRILFIFGNLPAMDRATRFVDENLNRLFSHAHASESVDQNSYECARAKEIEEAVAEFYGSGHGEESRYHYDLHTAIRPSKNEKFAVYPFLHGEKHDKEQISFLLACGIDTFLLSGSPTTTFSYYSSRQFGAHAFTVELGKVQAFGQNDMSRFTQVNDTLKRFISGQPLNLKSFNDQDVLIYQVNQVINKHAEDFELDFSDDLPNFSDFPKGTLLAHETGNEYRAEFDGEAVVFPNANVAIGQRAILTVIPTTLD.

The Zn(2+) site is built by H71, E74, and H169. E233 is a catalytic residue.

Belongs to the AspA/AstE family. Succinylglutamate desuccinylase subfamily. Zn(2+) serves as cofactor.

It catalyses the reaction N-succinyl-L-glutamate + H2O = L-glutamate + succinate. It functions in the pathway amino-acid degradation; L-arginine degradation via AST pathway; L-glutamate and succinate from L-arginine: step 5/5. Functionally, transforms N(2)-succinylglutamate into succinate and glutamate. This Pseudoalteromonas atlantica (strain T6c / ATCC BAA-1087) protein is Succinylglutamate desuccinylase.